A 51-amino-acid polypeptide reads, in one-letter code: MREKIKLVSSAGTGHFYTTKKNKRNTPEKIEIKKYDPVVRKHVAYKEAKIK.

The protein belongs to the bacterial ribosomal protein bL33 family.

This Marinobacter nauticus (strain ATCC 700491 / DSM 11845 / VT8) (Marinobacter aquaeolei) protein is Large ribosomal subunit protein bL33.